Consider the following 582-residue polypeptide: MDCLTDLRSTEGKVDQAGKTLILLVVWWGFGTTAEGHPLQQLWELPCDCSGGYVSPDLPITPTPSIAVASPLPDLRVWLQGSWGWGGGFRQQWECVFKPKIIPSVQEQPGPCECLTIATQMHSTCYEKAQECTLLGKTYFTAILQKTKLGSYEDGPNKLLQASCTGIWETSMLGPRCPCVCLDGGGPTDRFGRICAEGLEEIIRHSYPSVQYHPLALPRPRGVDLDPQTSDILEATHQVLNATNPQLAENCWLCMTLGTQSPQPSRRMAMSLSMEIAVLASLSGATHRVNRCQLLCREADNRTGIPVGYVHFTNCTSIQESLTRRVIYEILRDYVLHRVMYLCVEQHAYTALPNKWIGLCILASIVPDMSIIPGEEPIPLPSIEYTAGRHKRAVQFIPLLVGLGITGATLAGGTGLGVSVHTYHKLSNQLIEDVQALSGTINDLQDQIDSLAEVVLQNRRGLDLLTAEQGGICLALQEKCCFYANKSGIVRDKIRKLQEDLLARKRALYDNPLWNGLNGFLPYLLPSLGPLFGLILFLTLGPCIRKTLTRIIHDKIQGSKNPRISPAVQATPNRDGYPRSMV.

Residues Met1 to Glu35 form the signal peptide. At Gly36–Gly519 the chain is on the extracellular side. Residue Asn241 is glycosylated (N-linked (GlcNAc...) asparagine; by host). Positions Cys251–Cys254 match the CXXC motif. 3 cysteine pairs are disulfide-bonded: Cys251–Cys254, Cys251–Cys481, and Cys473–Cys480. Residues Asn301 and Asn314 are each glycosylated (N-linked (GlcNAc...) asparagine; by host). The segment at Phe396–Leu416 is fusion peptide. 2 coiled-coil regions span residues Gly417–Ala467 and Gln477–Leu513. The interval Leu456–Ile472 is immunosuppression. The CX6CC motif lies at Cys473–Cys481. An N-linked (GlcNAc...) asparagine; by host glycan is attached at Asn485. A helical transmembrane segment spans residues Phe520–Leu540. Residues Gly541–Val582 lie on the Cytoplasmic side of the membrane. The S-palmitoyl cysteine; by host moiety is linked to residue Cys543. Positions Pro562–Pro572 are enriched in polar residues. Positions Pro562–Val582 are disordered.

As to quaternary structure, the mature envelope protein (Env) consists of a trimer of SU-TM heterodimers attached by a labile interchain disulfide bond. Specific enzymatic cleavages in vivo yield mature proteins. Envelope glycoproteins are synthesized as an inactive precursor that is N-glycosylated and processed likely by host cell furin or by a furin-like protease in the Golgi to yield the mature SU and TM proteins. The cleavage site between SU and TM requires the minimal sequence [KR]-X-[KR]-R. Post-translationally, the CXXC motif is highly conserved across a broad range of retroviral envelope proteins. It is thought to participate in the formation of a labile disulfide bond possibly with the CX6CC motif present in the transmembrane protein. Isomerization of the intersubunit disulfide bond to an SU intrachain disulfide bond is thought to occur upon receptor recognition in order to allow membrane fusion. In terms of processing, the transmembrane protein is palmitoylated.

The protein resides in the virion membrane. Its subcellular location is the host cell membrane. The surface protein (SU) attaches the virus to the host cell by binding to its receptor. This interaction triggers the refolding of the transmembrane protein (TM) and is thought to activate its fusogenic potential by unmasking its fusion peptide. Fusion occurs at the host cell plasma membrane. Functionally, the transmembrane protein (TM) acts as a class I viral fusion protein. Under the current model, the protein has at least 3 conformational states: pre-fusion native state, pre-hairpin intermediate state, and post-fusion hairpin state. During viral and target cell membrane fusion, the coiled coil regions (heptad repeats) assume a trimer-of-hairpins structure, positioning the fusion peptide in close proximity to the C-terminal region of the ectodomain. The formation of this structure appears to drive apposition and subsequent fusion of viral and target cell membranes. Membranes fusion leads to delivery of the nucleocapsid into the cytoplasm. The polypeptide is Envelope glycoprotein (env) (Galliformes).